Consider the following 390-residue polypeptide: Formate-dependent phosphoribosylglycinamide formyltransferase (390 aa).

Residues 18-19 (EL) and Glu-78 each bind N(1)-(5-phospho-beta-D-ribosyl)glycinamide. ATP is bound by residues Arg-110, Lys-151, 156-161 (SSGKGQ), 191-194 (EEFL), and Glu-199. Positions 115-305 (DLASKELNIK…EFELHLRAFL (191 aa)) constitute an ATP-grasp domain. The Mg(2+) site is built by Glu-264 and Glu-276. Residues Asp-283, Lys-353, and 360–361 (RR) each bind N(1)-(5-phospho-beta-D-ribosyl)glycinamide.

It belongs to the PurK/PurT family. Homodimer.

The catalysed reaction is N(1)-(5-phospho-beta-D-ribosyl)glycinamide + formate + ATP = N(2)-formyl-N(1)-(5-phospho-beta-D-ribosyl)glycinamide + ADP + phosphate + H(+). Its pathway is purine metabolism; IMP biosynthesis via de novo pathway; N(2)-formyl-N(1)-(5-phospho-D-ribosyl)glycinamide from N(1)-(5-phospho-D-ribosyl)glycinamide (formate route): step 1/1. Its function is as follows. Involved in the de novo purine biosynthesis. Catalyzes the transfer of formate to 5-phospho-ribosyl-glycinamide (GAR), producing 5-phospho-ribosyl-N-formylglycinamide (FGAR). Formate is provided by PurU via hydrolysis of 10-formyl-tetrahydrofolate. This Prochlorococcus marinus (strain MIT 9515) protein is Formate-dependent phosphoribosylglycinamide formyltransferase.